The chain runs to 366 residues: Ribosomal RNA large subunit methyltransferase M (366 aa).

S-adenosyl-L-methionine-binding positions include serine 188, 221-224 (CPGG), aspartate 240, aspartate 260, and aspartate 277. Lysine 306 functions as the Proton acceptor in the catalytic mechanism.

This sequence belongs to the class I-like SAM-binding methyltransferase superfamily. RNA methyltransferase RlmE family. RlmM subfamily. In terms of assembly, monomer.

The protein localises to the cytoplasm. It catalyses the reaction cytidine(2498) in 23S rRNA + S-adenosyl-L-methionine = 2'-O-methylcytidine(2498) in 23S rRNA + S-adenosyl-L-homocysteine + H(+). Catalyzes the 2'-O-methylation at nucleotide C2498 in 23S rRNA. This is Ribosomal RNA large subunit methyltransferase M from Salmonella paratyphi C (strain RKS4594).